Here is a 410-residue protein sequence, read N- to C-terminus: Serine/threonine transporter SstT (410 aa).

9 helical membrane-spanning segments follow: residues 11–31, 45–65, 79–99, 138–158, 179–199, 214–234, 285–305, 327–347, and 353–373; these read VSLV…AVTV, FVGA…ISAI, ILIL…VASF, ALLN…GIAL, IVTW…FDAI, LAVL…LIVF, ISIP…ISVL, VLSA…LLLI, and LFGI…IIGV.

Belongs to the dicarboxylate/amino acid:cation symporter (DAACS) (TC 2.A.23) family.

The protein resides in the cell membrane. The catalysed reaction is L-serine(in) + Na(+)(in) = L-serine(out) + Na(+)(out). It catalyses the reaction L-threonine(in) + Na(+)(in) = L-threonine(out) + Na(+)(out). In terms of biological role, involved in the import of serine and threonine into the cell, with the concomitant import of sodium (symport system). The chain is Serine/threonine transporter SstT from Geobacillus thermodenitrificans (strain NG80-2).